The primary structure comprises 282 residues: Ribonuclease P protein subunit p38 (282 aa).

Disordered regions lie at residues 1 to 21 (MAAAPQAPGRGSVRKTRPLPV) and 61 to 103 (EDRK…QASG). Position 2 is an N-acetylalanine (Ala-2). Ser-12 bears the Phosphoserine mark. The span at 88-97 (EDLKKEKPKG) shows a compositional bias: basic and acidic residues. 2 positions are modified to phosphoserine: Ser-226 and Ser-235. The tract at residues 262 to 282 (KLIPNPNKIRKPPKSKRTASK) is disordered. Basic residues predominate over residues 269–282 (KIRKPPKSKRTASK).

It belongs to the eukaryotic ribosomal protein eL8 family. As to quaternary structure, component of nuclear RNase P and RNase MRP ribonucleoproteins. RNase P consists of a catalytic RNA moiety and about 10 protein subunits; POP1, POP4, POP5, POP7, RPP14, RPP21, RPP25, RPP30, RPP38 and RPP40. Within the RNase P complex, POP1, POP7 and RPP25 form the 'finger' subcomplex, POP5, RPP14, RPP40 and homodimeric RPP30 form the 'palm' subcomplex, and RPP21, POP4 and RPP38 form the 'wrist' subcomplex. All subunits of the RNase P complex interact with the catalytic RNA. Several subunits of RNase P are also part of the RNase MRP complex. RNase MRP consists of a catalytic RNA moiety and about 8 protein subunits; POP1, POP7, RPP25, RPP30, RPP38, RPP40 and possibly also POP4 and POP5.

It localises to the nucleus. It is found in the nucleolus. Its function is as follows. Component of ribonuclease P, a ribonucleoprotein complex that generates mature tRNA molecules by cleaving their 5'-ends. Also a component of the MRP ribonuclease complex, which cleaves pre-rRNA sequences. This chain is Ribonuclease P protein subunit p38 (RPP38), found in Bos taurus (Bovine).